The chain runs to 235 residues: Non-structural maintenance of chromosomes element 1 homolog (235 aa).

An RING-type; atypical zinc finger spans residues 181-225 (IKNCTLCKCLVLWDIRCGSCNIQYHRGCIQTYLQRRDICPSCGNL). Thr-185 carries the post-translational modification Phosphothreonine.

The protein belongs to the NSE1 family. As to quaternary structure, component of the Smc5-Smc6 complex which consists at least of Smc5, Smc6, Nse1, Nse2, Nse4 and MAGE. Nse1, Nse4 and MAGE probably form a subcomplex that bridges the head domains of the Smc5-Smc6 heterodimer. Interacts with MAGE and Nse4.

Its subcellular location is the nucleus. It carries out the reaction S-ubiquitinyl-[E2 ubiquitin-conjugating enzyme]-L-cysteine + [acceptor protein]-L-lysine = [E2 ubiquitin-conjugating enzyme]-L-cysteine + N(6)-ubiquitinyl-[acceptor protein]-L-lysine.. In terms of biological role, component of the SMC5-SMC6 complex, a complex involved in repair of DNA double-strand breaks by homologous recombination. The complex may promote sister chromatid homologous recombination by recruiting the SMC1-SMC3 cohesin complex to double-strand breaks. The polypeptide is Non-structural maintenance of chromosomes element 1 homolog (Drosophila melanogaster (Fruit fly)).